Here is a 226-residue protein sequence, read N- to C-terminus: Cytidylate kinase (226 aa).

12–20 (GPSGAGKGT) is a binding site for ATP.

It belongs to the cytidylate kinase family. Type 1 subfamily.

The protein resides in the cytoplasm. It carries out the reaction CMP + ATP = CDP + ADP. The catalysed reaction is dCMP + ATP = dCDP + ADP. The chain is Cytidylate kinase from Xanthomonas campestris pv. campestris (strain 8004).